The following is a 182-amino-acid chain: NADH-quinone oxidoreductase subunit 9 (182 aa).

2 4Fe-4S ferredoxin-type domains span residues 43-73 and 89-118; these read LTRH…VEPA and KVYE…LGYD. The [4Fe-4S] cluster site is built by C53, C56, S57, C59, C63, C98, I99, C101, C104, and C108.

It belongs to the complex I 23 kDa subunit family. NDH-1 is composed of 15 different subunits, Nqo1 to Nqo15. The complex has a L-shaped structure, with the hydrophobic arm (subunits Nqo7, Nqo8 and Nqo10 to Nqo14) embedded in the membrane and the hydrophilic peripheral arm (subunits Nqo1 to Nqo6, Nqo9 and Nqo15) protruding into the bacterial cytoplasm. The hydrophilic domain contains all the redox centers. Requires [4Fe-4S] cluster as cofactor.

The protein localises to the cell membrane. It catalyses the reaction a quinone + NADH + 5 H(+)(in) = a quinol + NAD(+) + 4 H(+)(out). NDH-1 shuttles electrons from NADH, via FMN and iron-sulfur (Fe-S) centers, to quinones in the respiratory chain. The immediate electron acceptor for the enzyme in this species is menaquinone. Couples the redox reaction to proton translocation (for every two electrons transferred, four hydrogen ions are translocated across the cytoplasmic membrane), and thus conserves the redox energy in a proton gradient required for the synthesis of ATP. The role of the Nqo9 subunit appears to provide a 'connecting chain' of two clusters between cluster N5 and the terminal cluster N2, and to stabilize the structure of the complex by interacting with other subunits. The polypeptide is NADH-quinone oxidoreductase subunit 9 (nqo9) (Thermus thermophilus (strain ATCC 27634 / DSM 579 / HB8)).